We begin with the raw amino-acid sequence, 125 residues long: MTSVRYTKDHEYVRVEGDVAVVGISDYAQQQLGDVVFVELPEIGKVVTKGGEAAVVESVKAASEVYAPLSGEVVEVNSELEGAPGLVNEAPEGKGWFMKLKLSNPAELDELLNEHAYKDFLDTLA.

Positions 19-101 (VAVVGISDYA…EGKGWFMKLK (83 aa)) constitute a Lipoyl-binding domain. An N6-lipoyllysine modification is found at lysine 60.

The protein belongs to the GcvH family. The glycine cleavage system is composed of four proteins: P, T, L and H. The cofactor is (R)-lipoate.

Its function is as follows. The glycine cleavage system catalyzes the degradation of glycine. The H protein shuttles the methylamine group of glycine from the P protein to the T protein. The chain is Glycine cleavage system H protein from Xanthobacter autotrophicus (strain ATCC BAA-1158 / Py2).